An 805-amino-acid polypeptide reads, in one-letter code: Sucrose synthase (805 aa).

The tract at residues 275–752 (MVFNVVILSP…GLQRIEEKYT (478 aa)) is GT-B glycosyltransferase.

Belongs to the glycosyltransferase 1 family. Plant sucrose synthase subfamily.

It catalyses the reaction an NDP-alpha-D-glucose + D-fructose = a ribonucleoside 5'-diphosphate + sucrose + H(+). Sucrose-cleaving enzyme that provides UDP-glucose and fructose for various metabolic pathways. The chain is Sucrose synthase (SS1) from Vigna radiata var. radiata (Mung bean).